The sequence spans 190 residues: Xanthine phosphoribosyltransferase (190 aa).

Xanthine-binding residues include leucine 20 and asparagine 27. 128–132 (ANGHA) is a binding site for 5-phospho-alpha-D-ribose 1-diphosphate. Lysine 156 is a xanthine binding site.

This sequence belongs to the purine/pyrimidine phosphoribosyltransferase family. Xpt subfamily. In terms of assembly, homodimer.

Its subcellular location is the cytoplasm. The catalysed reaction is XMP + diphosphate = xanthine + 5-phospho-alpha-D-ribose 1-diphosphate. It functions in the pathway purine metabolism; XMP biosynthesis via salvage pathway; XMP from xanthine: step 1/1. Converts the preformed base xanthine, a product of nucleic acid breakdown, to xanthosine 5'-monophosphate (XMP), so it can be reused for RNA or DNA synthesis. This chain is Xanthine phosphoribosyltransferase, found in Pseudomonas paraeruginosa (strain DSM 24068 / PA7) (Pseudomonas aeruginosa (strain PA7)).